A 113-amino-acid polypeptide reads, in one-letter code: Cell cycle protein GpsB (113 aa).

A coiled-coil region spans residues 36 to 68 (LDMVIKDYSTFTQEIEALQAENIRLVQELDNAP).

The protein belongs to the GpsB family. In terms of assembly, forms polymers through the coiled coil domains. Interacts with PBP1, MreC and EzrA.

It is found in the cytoplasm. Divisome component that associates with the complex late in its assembly, after the Z-ring is formed, and is dependent on DivIC and PBP2B for its recruitment to the divisome. Together with EzrA, is a key component of the system that regulates PBP1 localization during cell cycle progression. Its main role could be the removal of PBP1 from the cell pole after pole maturation is completed. Also contributes to the recruitment of PBP1 to the division complex. Not essential for septum formation. This is Cell cycle protein GpsB from Listeria welshimeri serovar 6b (strain ATCC 35897 / DSM 20650 / CCUG 15529 / CIP 8149 / NCTC 11857 / SLCC 5334 / V8).